Reading from the N-terminus, the 232-residue chain is Protein FAM228B (232 aa).

This sequence belongs to the FAM228 family.

In Mus musculus (Mouse), this protein is Protein FAM228B (Fam228b).